Consider the following 878-residue polypeptide: Phosphoenolpyruvate carboxylase (878 aa).

Active-site residues include His-138 and Lys-545.

This sequence belongs to the PEPCase type 1 family. Mg(2+) is required as a cofactor.

The enzyme catalyses oxaloacetate + phosphate = phosphoenolpyruvate + hydrogencarbonate. Forms oxaloacetate, a four-carbon dicarboxylic acid source for the tricarboxylic acid cycle. This chain is Phosphoenolpyruvate carboxylase, found in Shewanella loihica (strain ATCC BAA-1088 / PV-4).